We begin with the raw amino-acid sequence, 89 residues long: Small ribosomal subunit protein uS15 (89 aa).

Belongs to the universal ribosomal protein uS15 family. In terms of assembly, part of the 30S ribosomal subunit. Forms a bridge to the 50S subunit in the 70S ribosome, contacting the 23S rRNA.

In terms of biological role, one of the primary rRNA binding proteins, it binds directly to 16S rRNA where it helps nucleate assembly of the platform of the 30S subunit by binding and bridging several RNA helices of the 16S rRNA. Functionally, forms an intersubunit bridge (bridge B4) with the 23S rRNA of the 50S subunit in the ribosome. The chain is Small ribosomal subunit protein uS15 from Pseudomonas fluorescens (strain SBW25).